The primary structure comprises 851 residues: Glutathione transporter 1 (851 aa).

Residues 1 to 14 (MTARNSASIPTSIR) are compositionally biased toward polar residues. The tract at residues 1–116 (MTARNSASIP…LDNETDSEVE (116 aa)) is disordered. N-linked (GlcNAc...) asparagine glycosylation is present at Asn32. Residues 33–68 (LSTKTASKTSLTFRQSSSDESTSSYSGNHHNINIQH) show a composition bias toward low complexity. The span at 74-92 (FRTNSSSFSPNDYSISESP) shows a compositional bias: polar residues. N-linked (GlcNAc...) asparagine glycosylation occurs at Asn77. Ser93 bears the Phosphoserine mark. Residues 105 to 134 (VQLDNETDSEVESEVEELERELEAIEDSVY) are a coiled coil. Asn109 is a glycosylation site (N-linked (GlcNAc...) asparagine). 2 helical membrane passes run 156 to 176 (TWVL…FFSL) and 179 to 199 (PALS…GKLL). N-linked (GlcNAc...) asparagine glycosylation occurs at Asn256. The next 4 helical transmembrane spans lie at 259 to 279 (WGYK…FAGL), 282 to 302 (RWIV…TVLF), 333 to 353 (FFAY…FIFK), and 405 to 425 (WVIC…VPIL). 2 N-linked (GlcNAc...) asparagine glycosylation sites follow: Asn452 and Asn464. 5 consecutive transmembrane segments (helical) span residues 480-500 (YSMS…HCAL), 531-551 (APQW…IFTV), 560-580 (VWAL…QGVL), 592-612 (IITE…NLMI), and 642-662 (ILFF…VAVQ). Asn691 is a glycosylation site (N-linked (GlcNAc...) asparagine). Transmembrane regions (helical) follow at residues 711–731 (YYPL…TWGL), 757–777 (PATG…NYVI), and 791–811 (VLAA…FLCV). An N-linked (GlcNAc...) asparagine glycan is attached at Asn843.

Belongs to the oligopeptide OPT transporter family.

It localises to the endoplasmic reticulum membrane. It is found in the cell membrane. Functionally, high-affinity glutathione transporter which plays a role in scavenging glutathione from the extracellular environment for the maintenance of sulfur homeostasis. The sequence is that of Glutathione transporter 1 (pgt1) from Schizosaccharomyces pombe (strain 972 / ATCC 24843) (Fission yeast).